Here is a 472-residue protein sequence, read N- to C-terminus: 6-phosphogluconate dehydrogenase, decarboxylating (472 aa).

NADP(+) contacts are provided by residues 10-15 (GMAVMG), 33-35 (NRT), 74-76 (VQA), and N102. Substrate contacts are provided by residues N102 and 128-130 (SGG). The active-site Proton acceptor is the K184. 187–188 (HN) is a substrate binding site. E191 functions as the Proton donor in the catalytic mechanism. Residues Y192, K262, R289, R447, and H453 each contribute to the substrate site.

This sequence belongs to the 6-phosphogluconate dehydrogenase family. In terms of assembly, homodimer.

It catalyses the reaction 6-phospho-D-gluconate + NADP(+) = D-ribulose 5-phosphate + CO2 + NADPH. It participates in carbohydrate degradation; pentose phosphate pathway; D-ribulose 5-phosphate from D-glucose 6-phosphate (oxidative stage): step 3/3. In terms of biological role, catalyzes the oxidative decarboxylation of 6-phosphogluconate to ribulose 5-phosphate and CO(2), with concomitant reduction of NADP to NADPH. The sequence is that of 6-phosphogluconate dehydrogenase, decarboxylating (gnd) from Lactococcus lactis subsp. lactis (strain IL1403) (Streptococcus lactis).